A 320-amino-acid polypeptide reads, in one-letter code: MEIYGMVTGKAGKSGYGSASTAEDVTHSIDAKHLTAIITGGTSGIGLEAARVLGMRGAHVIIASRNTKAANDSKEMILQMYPNARIDCLQLDLSSIKSVRSFIHQFLALNVPLNILINNAGVMFCPFQLSEDGIESQFATNHIGHFLLTNLLLDKMKSSARESGIEGRIVNLSSIAHTYTYTEGIMFDYINDPDRYSEKKAYGQSKLANLLHSNALSRKLQEEGVNITINSVHPGLITTNLFRHSGLGMAVLKAMSFFLWKNIPQGAATTCYVALHPDLKDVTGKYFADCNVTTPSNFAIDTTLADKLWDFSIKLVESLP.

Residues 40–46, 92–93, asparagine 119, and threonine 140 contribute to the NADP(+) site; these read GGTSGIG and DL. Residue serine 174 coordinates substrate. The Proton acceptor role is filled by tyrosine 196. An interaction with calmodulin region spans residues 301–317; the sequence is DTTLADKLWDFSIKLVE.

It belongs to the short-chain dehydrogenases/reductases (SDR) family. In terms of assembly, part of the Tic complex. Expressed in the dehiscence zone of developing pods.

It is found in the plastid. The protein localises to the chloroplast inner membrane. In terms of biological role, involved in protein precursor import into chloroplasts. Maybe involved in pod abscission or dehiscence (pod shatter). The sequence is that of Short-chain dehydrogenase TIC 32 A, chloroplastic from Brassica napus (Rape).